Consider the following 206-residue polypeptide: Protein phosphatase inhibitor 2 (206 aa).

The segment at 1 to 36 (MAASTASHRPIKGILKNKTSAASPPVVPSAEQPRPI) is disordered. An N-acetylalanine modification is found at alanine 2. The required for binding PPP1CC stretch occupies residues 12-17 (KGILKN). Residues 44–56 (KSQKWDEMNILAT) form a required for binding the 'RVXF' binding groove of PPP1CC region. Serine 45 is modified (phosphoserine; by ATM). Threonine 74 bears the Phosphothreonine mark. Residues 75 to 143 (PYHNMIGDDE…EREKKRQFEM (69 aa)) form a disordered region. Positions 81–92 (GDDEDAYSDSEG) are enriched in acidic residues. Phosphoserine occurs at positions 88 and 90. 2 positions are modified to phosphothreonine: threonine 97 and threonine 117. Over residues 111 to 121 (SEPKYRTREQE) the composition is skewed to basic and acidic residues. A phosphoserine mark is found at serine 122, serine 123, and serine 131. Residues 122–131 (SSGEEDNDLS) show a composition bias toward acidic residues. The segment covering 132 to 143 (PEEREKKRQFEM) has biased composition (basic and acidic residues). Residues 148 to 151 (HYNE) are required for binding PPP1CC catalytic center, displacing metal ions and inhibition of PPP1CC catalytic activity. The tract at residues 164 to 206 (KDLHDDDEDEEMAETADGDSMNVEESSQGSTTSDHLQHKSQSS) is disordered. A compositionally biased stretch (acidic residues) spans 168-180 (DDDEDEEMAETAD). Polar residues predominate over residues 186 to 206 (VEESSQGSTTSDHLQHKSQSS).

This sequence belongs to the protein phosphatase inhibitor 2 family. In terms of assembly, heterodimer with PP1. Post-translationally, phosphorylation on Ser-45 by ATM activates PP1 by dissociating the PP1-PPP1R2 complex. Phosphorylation on Thr-74 by GSK3 activates PP1 by dissociating the PP1-PPP1R2 complex.

Its function is as follows. Inhibitor of protein-phosphatase 1. The chain is Protein phosphatase inhibitor 2 (Ppp1r2) from Mus musculus (Mouse).